Here is a 294-residue protein sequence, read N- to C-terminus: NAD kinase (294 aa).

The active-site Proton acceptor is the aspartate 72. Residues 72 to 73 (DG), 146 to 147 (ND), arginine 157, arginine 174, aspartate 176, 187 to 192 (TAYALS), and glutamine 247 each bind NAD(+).

The protein belongs to the NAD kinase family. The cofactor is a divalent metal cation.

It is found in the cytoplasm. It carries out the reaction NAD(+) + ATP = ADP + NADP(+) + H(+). Involved in the regulation of the intracellular balance of NAD and NADP, and is a key enzyme in the biosynthesis of NADP. Catalyzes specifically the phosphorylation on 2'-hydroxyl of the adenosine moiety of NAD to yield NADP. The polypeptide is NAD kinase (Saccharophagus degradans (strain 2-40 / ATCC 43961 / DSM 17024)).